We begin with the raw amino-acid sequence, 615 residues long: Vitamin B12 transporter BtuB (615 aa).

Residues 1-20 (MIKKISLLTALSVTAFSGWA) form the signal peptide. A TonB box motif is present at residues 26 to 33 (NAMVVTAN). The TBDR plug domain occupies 38-152 (PVNSVLAPTT…IGGVVNIITT (115 aa)). Cyanocob(III)alamin is bound by residues serine 85, asparagine 92, and 110–111 (IS). The TBDR beta-barrel domain maps to 155–615 (KNGTTLNAGV…EYYLTGSYTF (461 aa)). Transmembrane regions (beta stranded) follow at residues 158–165 (TTLNAGVG), 169–178 (YQSYDAATQQ), and 184–195 (TTATLAGNYVYT). Ca(2+)-binding residues include aspartate 199, glutamine 210, aspartate 212, and aspartate 214. The next 2 membrane-spanning stretches (beta stranded) occupy residues 216-226 (FMSKSLYGTVE) and 231-247 (DQFS…NRTD). Tyrosine 248, aspartate 249, and aspartate 255 together coordinate Ca(2+). 14 beta stranded membrane-spanning segments follow: residues 257 to 271 (RQLY…LRYQ), 273 to 290 (GIYS…KDYD), 303 to 319 (TLVD…NVLQ), 322 to 331 (AGTVSAGVDW), 347 to 363 (ESQN…QRFA), 365 to 375 (IVLEGSVRGDD), 379 to 394 (FGWH…WEFI), 397 to 411 (YSLI…KAPN), 429 to 438 (ESKQWESGVE), 444 to 453 (VIWRVSGYRN), 468 to 486 (VYEN…TASF), 490 to 505 (PVGH…SRNA), 513 to 525 (RRAK…QLDW), and 531 to 546 (DWSV…YDKD). Threonine 303 contacts cyanocob(III)alamin. Arginine 513 lines the cyanocob(III)alamin pocket. Cyanocob(III)alamin is bound at residue tyrosine 547. A run of 3 beta stranded transmembrane segments spans residues 559 to 573 (TVKL…LAAS), 586 to 597 (IANLFDKDYETA), and 603 to 615 (AGRE…SYTF). The TonB C-terminal box motif lies at 598 to 615 (YGYRTAGREYYLTGSYTF).

This sequence belongs to the TonB-dependent receptor family. BtuB (TC 1.B.14.3.1) subfamily.

The protein localises to the cell outer membrane. In terms of biological role, involved in the active translocation of vitamin B12 (cyanocobalamin) across the outer membrane to the periplasmic space. It derives its energy for transport by interacting with the trans-periplasmic membrane protein TonB. The polypeptide is Vitamin B12 transporter BtuB (Pectobacterium atrosepticum (strain SCRI 1043 / ATCC BAA-672) (Erwinia carotovora subsp. atroseptica)).